The primary structure comprises 145 residues: MKKLTKKAENLLLLIWVQAFLALAGSLFYSEVMNYVPCELCWYQRILMYPLVLIYGVAAIKKDISFALPGLFMSGIGLLVSTYHYLVQHVSIFQEVGGACSGSVPCNVIYVNYFGFISIPFMAGVAFLIIFVLHLLILREQGRKA.

Residues 9-28 (ENLLLLIWVQAFLALAGSLF) form a helical membrane-spanning segment. The cysteines at positions 38 and 41 are disulfide-linked. 2 helical membrane-spanning segments follow: residues 43-62 (YQRILMYPLVLIYGVAAIKK) and 69-86 (PGLFMSGIGLLVSTYHYL). An intrachain disulfide couples Cys-100 to Cys-106. A helical transmembrane segment spans residues 115 to 137 (GFISIPFMAGVAFLIIFVLHLLI).

The protein belongs to the DsbB family. BdbC subfamily.

The protein resides in the cell membrane. In terms of biological role, required for disulfide bond formation in some proteins. This chain is Probable disulfide formation protein, found in Oceanobacillus iheyensis (strain DSM 14371 / CIP 107618 / JCM 11309 / KCTC 3954 / HTE831).